The chain runs to 289 residues: Shikimate dehydrogenase (NADP(+)) (289 aa).

Shikimate-binding positions include 19–21 and Thr66; that span reads SMS. Lys70 (proton acceptor) is an active-site residue. Residues Asn91 and Asp106 each contribute to the shikimate site. Residues 131–135, 155–160, and Leu229 contribute to the NADP(+) site; these read GAGGA and NRTLKK. Tyr231 contacts shikimate. Residue Gly252 coordinates NADP(+).

It belongs to the shikimate dehydrogenase family. In terms of assembly, homodimer.

The enzyme catalyses shikimate + NADP(+) = 3-dehydroshikimate + NADPH + H(+). Its pathway is metabolic intermediate biosynthesis; chorismate biosynthesis; chorismate from D-erythrose 4-phosphate and phosphoenolpyruvate: step 4/7. Functionally, involved in the biosynthesis of the chorismate, which leads to the biosynthesis of aromatic amino acids. Catalyzes the reversible NADPH linked reduction of 3-dehydroshikimate (DHSA) to yield shikimate (SA). The chain is Shikimate dehydrogenase (NADP(+)) from Halothermothrix orenii (strain H 168 / OCM 544 / DSM 9562).